We begin with the raw amino-acid sequence, 150 residues long: Ribosome-binding factor A (150 aa).

A disordered region spans residues E126–E150.

This sequence belongs to the RbfA family. In terms of assembly, monomer. Binds 30S ribosomal subunits, but not 50S ribosomal subunits or 70S ribosomes.

It localises to the cytoplasm. Functionally, one of several proteins that assist in the late maturation steps of the functional core of the 30S ribosomal subunit. Associates with free 30S ribosomal subunits (but not with 30S subunits that are part of 70S ribosomes or polysomes). Required for efficient processing of 16S rRNA. May interact with the 5'-terminal helix region of 16S rRNA. The polypeptide is Ribosome-binding factor A (Brucella abortus (strain S19)).